Reading from the N-terminus, the 382-residue chain is Dual-specificity RNA methyltransferase RlmN (382 aa).

The Proton acceptor role is filled by glutamate 95. Positions 101 to 348 (EDDRGTLCIS…TTVRKTRGDD (248 aa)) constitute a Radical SAM core domain. Cysteine 108 and cysteine 353 are disulfide-bonded. [4Fe-4S] cluster-binding residues include cysteine 115, cysteine 119, and cysteine 122. S-adenosyl-L-methionine contacts are provided by residues 179–180 (GE), serine 211, 233–235 (SLH), and asparagine 310. Cysteine 353 (S-methylcysteine intermediate) is an active-site residue.

The protein belongs to the radical SAM superfamily. RlmN family. It depends on [4Fe-4S] cluster as a cofactor.

It is found in the cytoplasm. The catalysed reaction is adenosine(2503) in 23S rRNA + 2 reduced [2Fe-2S]-[ferredoxin] + 2 S-adenosyl-L-methionine = 2-methyladenosine(2503) in 23S rRNA + 5'-deoxyadenosine + L-methionine + 2 oxidized [2Fe-2S]-[ferredoxin] + S-adenosyl-L-homocysteine. It catalyses the reaction adenosine(37) in tRNA + 2 reduced [2Fe-2S]-[ferredoxin] + 2 S-adenosyl-L-methionine = 2-methyladenosine(37) in tRNA + 5'-deoxyadenosine + L-methionine + 2 oxidized [2Fe-2S]-[ferredoxin] + S-adenosyl-L-homocysteine. Functionally, specifically methylates position 2 of adenine 2503 in 23S rRNA and position 2 of adenine 37 in tRNAs. m2A2503 modification seems to play a crucial role in the proofreading step occurring at the peptidyl transferase center and thus would serve to optimize ribosomal fidelity. The protein is Dual-specificity RNA methyltransferase RlmN of Bordetella parapertussis (strain 12822 / ATCC BAA-587 / NCTC 13253).